The chain runs to 363 residues: Trichothecene biosynthesis protein 14 (363 aa).

Belongs to the TRI14 family.

In terms of biological role, part of the gene cluster that mediates the production of the antimicrobial trichothecene harzianum A (HA) that plays a role in Botrytis cinerea antagonistic activity and plant defense priming. The biosynthesis of harzianum A begins with the cyclization of farnesyl diphosphate to trichodiene and is catalyzed by the trichodiene synthase TRI5. Trichodiene undergoes a series of oxygenations catalyzed by the cytochrome P450 monooxygenase TRI4. TRI4 controls the addition of 3 oxygens at C-2, C-11, and the C-12, C-13-epoxide to form the intermediate isotrichodiol. Isotrichodiol then undergoes a non-enzymatic isomerization and cyclization to form 12,13-epoxytrichothec-9-ene (EPT) which is further converted to trichodermol by the cytochrome P450 monooxygenase TRI11 via C-4 hydroxylation. The last step of HA synthesis is esterification of an octatriendioyl moiety to the C-4 oxygen of trichodermol. The octatriendioyl moiety is probably produced by the polyketide synthase TRI17 and the esterification performed by the trichothecene O-acetyltransferase TRI3. The chain is Trichothecene biosynthesis protein 14 from Trichoderma arundinaceum.